Here is a 415-residue protein sequence, read N- to C-terminus: Type II methyltransferase M.DdeI (415 aa).

Residues 1 to 373 enclose the SAM-dependent MTase C5-type domain; sequence MNIIDLFAGC…ERISWYFENI (373 aa). Cys76 is a catalytic residue.

It belongs to the class I-like SAM-binding methyltransferase superfamily. C5-methyltransferase family.

The enzyme catalyses a 2'-deoxycytidine in DNA + S-adenosyl-L-methionine = a 5-methyl-2'-deoxycytidine in DNA + S-adenosyl-L-homocysteine + H(+). In terms of biological role, a methylase that recognizes the double-stranded sequence 5'-CTNAG-3', methylates C-1 on both strands, and protects the DNA from cleavage by the DdeI endonuclease. This chain is Type II methyltransferase M.DdeI (ddeIM), found in Desulfomicrobium norvegicum (strain DSM 1741 / NCIMB 8310) (Desulfovibrio baculatus (strain Norway 4)).